The primary structure comprises 199 residues: Insertion sequence IS21-like putative ATP-binding protein (199 aa).

114–121 is an ATP binding site; the sequence is GDSGTGKT.

The protein belongs to the IS21/IS1162 putative ATP-binding protein family.

In Bacteroides fragilis (strain YCH46), this protein is Insertion sequence IS21-like putative ATP-binding protein (tnpB).